The chain runs to 655 residues: Probable alpha-galactosidase D (655 aa).

The signal sequence occupies residues 1–16 (MLPKIFYLSLLPAALG). N-linked (GlcNAc...) asparagine glycans are attached at residues Asn-47 and Asn-91. The cysteines at positions 124 and 155 are disulfide-linked. Asp-153 serves as the catalytic Nucleophile. Residues Asn-180 and Asn-189 are each glycosylated (N-linked (GlcNAc...) asparagine). Residue 198 to 202 (EWGID) participates in substrate binding. Residue Asp-220 is the Proton donor of the active site. 7 N-linked (GlcNAc...) asparagine glycosylation sites follow: Asn-349, Asn-436, Asn-458, Asn-503, Asn-537, Asn-541, and Asn-580.

It belongs to the glycosyl hydrolase 27 family.

It is found in the secreted. It catalyses the reaction Hydrolysis of terminal, non-reducing alpha-D-galactose residues in alpha-D-galactosides, including galactose oligosaccharides, galactomannans and galactolipids.. In terms of biological role, hydrolyzes a variety of simple alpha-D-galactoside as well as more complex molecules such as oligosaccharides and polysaccharides. In Aspergillus flavus (strain ATCC 200026 / FGSC A1120 / IAM 13836 / NRRL 3357 / JCM 12722 / SRRC 167), this protein is Probable alpha-galactosidase D (aglD).